Reading from the N-terminus, the 136-residue chain is Glutamyl-tRNA(Gln) amidotransferase subunit C, mitochondrial (136 aa).

It belongs to the GatC family. In terms of assembly, subunit of the heterotrimeric GatCAB amidotransferase (AdT) complex, composed of A (QRSL1), B (GATB) and C (GATC) subunits.

It localises to the mitochondrion. The enzyme catalyses L-glutamyl-tRNA(Gln) + L-glutamine + ATP + H2O = L-glutaminyl-tRNA(Gln) + L-glutamate + ADP + phosphate + H(+). In terms of biological role, allows the formation of correctly charged Gln-tRNA(Gln) through the transamidation of misacylated Glu-tRNA(Gln) in the mitochondria. The reaction takes place in the presence of glutamine and ATP through an activated gamma-phospho-Glu-tRNA(Gln). The sequence is that of Glutamyl-tRNA(Gln) amidotransferase subunit C, mitochondrial from Homo sapiens (Human).